A 157-amino-acid polypeptide reads, in one-letter code: S-ribosylhomocysteine lyase (157 aa).

The Fe cation site is built by histidine 54, histidine 58, and cysteine 126.

Belongs to the LuxS family. In terms of assembly, homodimer. Requires Fe cation as cofactor.

It carries out the reaction S-(5-deoxy-D-ribos-5-yl)-L-homocysteine = (S)-4,5-dihydroxypentane-2,3-dione + L-homocysteine. Functionally, involved in the synthesis of autoinducer 2 (AI-2) which is secreted by bacteria and is used to communicate both the cell density and the metabolic potential of the environment. The regulation of gene expression in response to changes in cell density is called quorum sensing. Catalyzes the transformation of S-ribosylhomocysteine (RHC) to homocysteine (HC) and 4,5-dihydroxy-2,3-pentadione (DPD). The protein is S-ribosylhomocysteine lyase of Bacillus cereus (strain G9842).